The sequence spans 124 residues: Ribonuclease pancreatic (124 aa).

Positions 1-13 (KESAAAKFERQHM) are enriched in basic and acidic residues. Residues 1 to 23 (KESAAAKFERQHMDPSASSISSS) are disordered. Residues K7 and R10 each coordinate substrate. The active-site Proton acceptor is H12. 4 cysteine pairs are disulfide-bonded: C26–C84, C40–C95, C58–C110, and C65–C72. An N-linked (GlcNAc...) asparagine glycan is attached at N34. Substrate-binding positions include 41 to 45 (KPVNT), K66, and R85. Catalysis depends on H119, which acts as the Proton donor.

It belongs to the pancreatic ribonuclease family. As to quaternary structure, monomer. Interacts with and forms tight 1:1 complexes with RNH1. Dimerization of two such complexes may occur. Interaction with RNH1 inhibits this protein. In terms of tissue distribution, pancreas.

The protein resides in the secreted. The catalysed reaction is an [RNA] containing cytidine + H2O = an [RNA]-3'-cytidine-3'-phosphate + a 5'-hydroxy-ribonucleotide-3'-[RNA].. It carries out the reaction an [RNA] containing uridine + H2O = an [RNA]-3'-uridine-3'-phosphate + a 5'-hydroxy-ribonucleotide-3'-[RNA].. Endonuclease that catalyzes the cleavage of RNA on the 3' side of pyrimidine nucleotides. Acts on single-stranded and double-stranded RNA. The protein is Ribonuclease pancreatic (RNASE1) of Alces alces alces (European moose).